Reading from the N-terminus, the 573-residue chain is Putative 15-O-acetyltransferase SAT12 (573 aa).

The interval 1-40 is disordered; sequence MLDDDCSPTSSSEMSNASSREASITSRSSSTSGNNSLPED. The segment covering 7 to 36 has biased composition (low complexity); it reads SPTSSSEMSNASSREASITSRSSSTSGNNS.

It belongs to the trichothecene O-acetyltransferase family.

It functions in the pathway mycotoxin biosynthesis. Functionally, putative 15-O-acetyltransferase; part of the satratoxin SC2 cluster involved in the biosynthesis of satratoxins, trichothecene mycotoxins that are associated with human food poisonings. Satratoxins are suggested to be made by products of multiple gene clusters (SC1, SC2 and SC3) that encode 21 proteins in all, including polyketide synthases, acetyltransferases, and other enzymes expected to modify the trichothecene skeleton. SC1 encodes 10 proteins, SAT1 to SAT10. The largest are SAT8, which encodes a putative polyketide synthase (PKS) with a conventional non-reducing architecture, and SAT10, a putative protein containing four ankyrin repeats and thus may be involved in protein scaffolding. The putative short-chain reductase SAT3 may assist the PKS in some capacity. SAT6 contains a secretory lipase domain and acts probably as a trichothecene esterase. SAT5 encodes a putative acetyltransferase, and so, with SAT6, may affect endogenous protection from toxicity. The probable transcription factor SAT9 may regulate the expression of the SC1 cluster. SC2 encodes proteins SAT11 to SAT16, the largest of which encodes the putative reducing PKS SAT13. SAT11 is a cytochrome P450 monooxygenase, while SAT14 and SAT16 are probable acetyltransferases. The SC2 cluster may be regulated by the transcription factor SAT15. SC3 is a small cluster that encodes 5 proteins, SAT17 to SAT21. SAT21 is a putative MFS-type transporter which may have a role in exporting secondary metabolites. The four other proteins putatively encoded in SC3 include the taurine hydroxylase-like protein SAT17, the O-methyltransferase SAT18, the acetyltransferase SAT19, and the Cys6-type zinc finger SAT20, the latter being probably involved in regulation of SC3 expression. The polypeptide is Putative 15-O-acetyltransferase SAT12 (Stachybotrys chartarum (strain CBS 109288 / IBT 7711) (Toxic black mold)).